Reading from the N-terminus, the 90-residue chain is CRISPR-associated endonuclease Cas2 2 (90 aa).

Asp-11 is a Mg(2+) binding site.

This sequence belongs to the CRISPR-associated endoribonuclease Cas2 protein family. Homodimer, forms a heterotetramer with a Cas1 homodimer. Mn(2+) serves as cofactor. It depends on Mg(2+) as a cofactor.

Inhibited by EDTA and at pH 6.0. Functionally, CRISPR (clustered regularly interspaced short palindromic repeat), is an adaptive immune system that provides protection against mobile genetic elements (viruses, transposable elements and conjugative plasmids). CRISPR clusters contain sequences complementary to antecedent mobile elements and target invading nucleic acids. CRISPR clusters are transcribed and processed into CRISPR RNA (crRNA). Involved in the integration of spacer DNA into the CRISPR cassette. Functions as a dsDNA endonuclease and as a weak ssRNase. This chain is CRISPR-associated endonuclease Cas2 2 (cas2b), found in Thermus thermophilus (strain ATCC BAA-163 / DSM 7039 / HB27).